The following is a 235-amino-acid chain: Putative homeobox-leucine zipper protein ATHB-51 (235 aa).

The homeobox DNA-binding region spans 74-133; the sequence is EMIKKKRLTSGQLASLERSFQEEIKLDSDRKVKLSRELGLQPRQIAVWFQNRRARWKAKQ. Residues 134–162 are leucine-zipper; the sequence is LEQLYDSLRQEYDVVSREKQMLHDEVKKL.

It belongs to the HD-ZIP homeobox family. Class I subfamily. Widely expressed.

Its subcellular location is the nucleus. Its function is as follows. Putative transcription factor. The polypeptide is Putative homeobox-leucine zipper protein ATHB-51 (ATHB-51) (Arabidopsis thaliana (Mouse-ear cress)).